Reading from the N-terminus, the 30-residue chain is IGAGVGRDGTIAATKGKAKTLAELIXMYDS.

In terms of assembly, monomer. Post-translationally, binds 4 heme groups per subunit.

It is found in the periplasm. Participates in sulfate respiration coupled with phosphorylation by transferring electrons from the enzyme dehydrogenase to ferredoxin. This chain is Cytochrome c3, 50 kDa, found in Desulfuromonas acetoxidans (Chloropseudomonas ethylica).